The primary structure comprises 459 residues: Cysteine--tRNA ligase (459 aa).

Position 28 (C28) interacts with Zn(2+). A 'HIGH' region motif is present at residues 30-40 (VTVYDLCHIGH). C209, H234, and E238 together coordinate Zn(2+). The short motif at 266–270 (KMSKS) is the 'KMSKS' region element. Position 269 (K269) interacts with ATP.

It belongs to the class-I aminoacyl-tRNA synthetase family. Monomer. It depends on Zn(2+) as a cofactor.

It is found in the cytoplasm. It carries out the reaction tRNA(Cys) + L-cysteine + ATP = L-cysteinyl-tRNA(Cys) + AMP + diphosphate. This chain is Cysteine--tRNA ligase, found in Shewanella oneidensis (strain ATCC 700550 / JCM 31522 / CIP 106686 / LMG 19005 / NCIMB 14063 / MR-1).